We begin with the raw amino-acid sequence, 252 residues long: MSIKIPFLSKQVKETELEDWDNIPSHIAIIMDGNGRWAQKRGLPRIAGHREGVSTVNRIVKTAVNANVKVLTLYTFSTENWKRPKSEVDFILKLPKEFLHVYLPGLIENNVRVQTIGDFNAVPKHTQDAIEYAMEKTKDNDGLVLNFALNYGSRYEIIHAVKQIVQKTKASELDVEQLDESYFEKHLFTNGLSDPDLLIRTGGEYRLSNFMLWQLAYTEFWFTEKLWPEFDEDTFHQALMEYQQRKRRYGGI.

Aspartate 32 is a catalytic residue. Position 32 (aspartate 32) interacts with Mg(2+). Substrate-binding positions include 33–36 (GNGR), tryptophan 37, arginine 45, histidine 49, and 77–79 (STE). The active-site Proton acceptor is asparagine 80. Substrate is bound by residues tryptophan 81, arginine 83, arginine 200, and 206 to 208 (RLS). Glutamate 219 is a binding site for Mg(2+).

This sequence belongs to the UPP synthase family. In terms of assembly, homodimer. The cofactor is Mg(2+).

Catalyzes the condensation of isopentenyl diphosphate (IPP) with allylic pyrophosphates generating different type of terpenoids. This Oceanobacillus iheyensis (strain DSM 14371 / CIP 107618 / JCM 11309 / KCTC 3954 / HTE831) protein is Isoprenyl transferase.